Consider the following 608-residue polypeptide: Threonine--tRNA ligase (608 aa).

Residues 1-144 (MRILLIHSDY…SRTITAEEEE (144 aa)) are editing domain. A catalytic region spans residues 195–489 (PHVKLMREKE…ELDEKAPMLP (295 aa)). Positions 286, 338, and 459 each coordinate Zn(2+).

Belongs to the class-II aminoacyl-tRNA synthetase family. Homodimer. Zn(2+) is required as a cofactor.

It is found in the cytoplasm. The enzyme catalyses tRNA(Thr) + L-threonine + ATP = L-threonyl-tRNA(Thr) + AMP + diphosphate + H(+). In terms of biological role, catalyzes the attachment of threonine to tRNA(Thr) in a two-step reaction: L-threonine is first activated by ATP to form Thr-AMP and then transferred to the acceptor end of tRNA(Thr). Also edits incorrectly charged L-seryl-tRNA(Thr). The sequence is that of Threonine--tRNA ligase from Methanobrevibacter smithii (strain ATCC 35061 / DSM 861 / OCM 144 / PS).